A 226-amino-acid polypeptide reads, in one-letter code: Reticulon-like protein B16 (226 aa).

Residues 41-224 form the Reticulon domain; sequence AADLLLWRRR…RLSWSLSKDK (184 aa). Transmembrane regions (helical) follow at residues 54–74, 75–95, and 149–169; these read LGVI…GLPF, LSVS…HARV, and VVIC…CTLL.

Its subcellular location is the endoplasmic reticulum membrane. The polypeptide is Reticulon-like protein B16 (RTNLB16) (Arabidopsis thaliana (Mouse-ear cress)).